Reading from the N-terminus, the 93-residue chain is MNGIKYAVFTDKSIRLLGKNQYTSNVESGSTRTEIKHWVELFFGVKVKAMNSHRLPAKGRKVRLIMGHTMHYRRMIITLQPGYSIPPLRKKRT.

It belongs to the universal ribosomal protein uL23 family. In terms of assembly, part of the 50S ribosomal subunit.

The protein resides in the plastid. It localises to the chloroplast. Functionally, binds to 23S rRNA. This Lotus japonicus (Lotus corniculatus var. japonicus) protein is Large ribosomal subunit protein uL23cz/uL23cy (rpl23-A).